We begin with the raw amino-acid sequence, 338 residues long: MLNEREKILLKTLVERYIHEGQPVGSRSLAKFSGLDLSPATIRNVMTDLEEMGYVSSPHTSAGRMPTTLGYRFFVDTLLVVKSLDNEQITLLENQLHPNNPTHLMNVTSRLLSELTRFVGVVVTPKRMGGAVFRHIEFVALTEKRILLILVTPEGDVQNRIILTETAYSQSDLIEAGNFLNQHYAGCTLEEIRSGLQRELTQLRRDMTGLMNAAIEIGNDALQESSEAVVIAGEHRLFDVRDLSDNLSSLKSLFEMFERKSKLLQLMELSRQAHGVKIFIGGESDETMLEEVSVVTAPYEMEGKIVGTVGVIGPRRMAYERIIPIVDITAKLLSSNLS.

This sequence belongs to the HrcA family.

Negative regulator of class I heat shock genes (grpE-dnaK-dnaJ and groELS operons). Prevents heat-shock induction of these operons. This is Heat-inducible transcription repressor HrcA from Nitrosomonas europaea (strain ATCC 19718 / CIP 103999 / KCTC 2705 / NBRC 14298).